The primary structure comprises 416 residues: Putative competence-damage inducible protein (416 aa).

This sequence belongs to the CinA family.

In Geobacillus sp. (strain WCH70), this protein is Putative competence-damage inducible protein.